Reading from the N-terminus, the 399-residue chain is Chalcone synthase 2 (399 aa).

C166 is a catalytic residue.

Belongs to the thiolase-like superfamily. Chalcone/stilbene synthases family.

The catalysed reaction is (E)-4-coumaroyl-CoA + 3 malonyl-CoA + 3 H(+) = 2',4,4',6'-tetrahydroxychalcone + 3 CO2 + 4 CoA. It participates in secondary metabolite biosynthesis; flavonoid biosynthesis. Its function is as follows. The primary product of this enzyme is 4,2',4',6'-tetrahydroxychalcone (also termed naringenin-chalcone or chalcone) which can under specific conditions spontaneously isomerize into naringenin. Substrate preference is feruloyl-CoA = caffeoyl-CoA &gt;&gt; cinnamoyl-CoA. The protein is Chalcone synthase 2 (CHS2) of Hordeum vulgare (Barley).